A 165-amino-acid chain; its full sequence is Cytochrome c-type biogenesis protein CcmE (165 aa).

Residues 1–29 (MSATAEQNARNPKGKGGFARTVSQRKRKR) lie on the Cytoplasmic side of the membrane. The helical; Signal-anchor for type II membrane protein transmembrane segment at 30 to 50 (LFLIGGALAVLAVAVGLMLTA) threads the bilayer. Residues 51-165 (FNQDIRFFRT…LKKKGVWEGK (115 aa)) are Periplasmic-facing. Heme contacts are provided by His143 and Tyr147.

Belongs to the CcmE/CycJ family.

The protein localises to the cell inner membrane. Functionally, heme chaperone required for the biogenesis of c-type cytochromes. Transiently binds heme delivered by CcmC and transfers the heme to apo-cytochromes in a process facilitated by CcmF and CcmH. This chain is Cytochrome c-type biogenesis protein CcmE, found in Brucella abortus (strain S19).